Consider the following 718-residue polypeptide: MTSYELSRELGGHKQDVRGVCSISNELIGSASRDGTYSVWEQINGEWTPHFYENHEGFVNCVCYVPAIDKNSRGYIFSGGQDKCGILQEVGTNSPSYYLFGHESNICSASALNSETIITGSWDSTARVWALGQCKYVLKGHQSSVWAVLALGEDIFITGSADKLIKIWNGEKLVKSILAHNDCVRSLCQIPGGFASCSNDGVIKLWTSDGEFLYELHGHTSFVYSLTYIHNQQLIASCGEDRTIRIWKGKECLQCITLPTTSVWSVSSLPNGDLVCGSSDGFVRIFTVDKVRVAPTEVLKNFEERVSQFAISSQEVGDIKKGSLPGLEILSKPGKADGDVVMVRVNNDVEAYQWSQKENEWKKIGQVVDAVGNNRKQLFEGKEYDYVFDVDVADGQAPLKLPYNATENPYQAANRFLELNQLPLSYTDEVVKFIEKNTQGHSLESKKEPNLESQSSNKIKTTIFPVSQLLFSNANVPAMCQRLRSLNNTKSNPLPAKSIDSLERALSSKKITDTEKNELLETCLSILDSWSLAERFPALDALRLLAINSSSDLAPIFLEVFSRVVKSVPSSGNFESINVMLALRGLSNVVPNITDAEGVSKLMDCLTSTVPQASSAKDFKIAFATLAMNLSILLIQLNLENTGIELLSILFSFLDDPSPDNEAFYRALMALGTLCTVPDIALAASQIYHAQSIVHGIAERFSQEMRFVDAEKQILSLF.

WD repeat units lie at residues 12-50 (GHKQ…WTPH), 54-98 (NHEG…PSYY), 101-139 (GHES…YVLK), 140-178 (GHQS…KSIL), 180-217 (HNDC…YELH), 218-257 (GHTS…QCIT), and 259-296 (PTTS…VAPT). In terms of domain architecture, PFU spans 353 to 448 (QWSQKENEWK…QGHSLESKKE (96 aa)). The PUL domain occupies 462–717 (TIFPVSQLLF…VDAEKQILSL (256 aa)).

Interacts with cdc48.

The protein localises to the nucleus. The protein resides in the cytoplasm. Functionally, acts as a negative regulator of vacuole-dependent ubiquitin degradation. The sequence is that of Ubiquitin homeostasis protein lub1 (lub1) from Schizosaccharomyces pombe (strain 972 / ATCC 24843) (Fission yeast).